We begin with the raw amino-acid sequence, 329 residues long: Beta-ketoacyl-[acyl-carrier-protein] synthase III (329 aa).

Residues Cys113 and His255 contribute to the active site. The interval 256-260 is ACP-binding; that stretch reads QANQR. Asn285 is an active-site residue.

This sequence belongs to the thiolase-like superfamily. FabH family. Homodimer.

Its subcellular location is the cytoplasm. It carries out the reaction malonyl-[ACP] + acetyl-CoA + H(+) = 3-oxobutanoyl-[ACP] + CO2 + CoA. The protein operates within lipid metabolism; fatty acid biosynthesis. Functionally, catalyzes the condensation reaction of fatty acid synthesis by the addition to an acyl acceptor of two carbons from malonyl-ACP. Catalyzes the first condensation reaction which initiates fatty acid synthesis and may therefore play a role in governing the total rate of fatty acid production. Possesses both acetoacetyl-ACP synthase and acetyl transacylase activities. Its substrate specificity determines the biosynthesis of branched-chain and/or straight-chain of fatty acids. This Chlorobaculum tepidum (strain ATCC 49652 / DSM 12025 / NBRC 103806 / TLS) (Chlorobium tepidum) protein is Beta-ketoacyl-[acyl-carrier-protein] synthase III.